Reading from the N-terminus, the 521-residue chain is GMP synthase [glutamine-hydrolyzing] (521 aa).

Positions 8 to 203 (KILILDFGAQ…VVDVCGCQTL (196 aa)) constitute a Glutamine amidotransferase type-1 domain. C85 (nucleophile) is an active-site residue. Catalysis depends on residues H177 and E179. In terms of domain architecture, GMPS ATP-PPase spans 204-396 (WTAANIIDDQ…LGLPRTMVYR (193 aa)). An ATP-binding site is contributed by 231-237 (SGGVDSS).

Homodimer.

The catalysed reaction is XMP + L-glutamine + ATP + H2O = GMP + L-glutamate + AMP + diphosphate + 2 H(+). The protein operates within purine metabolism; GMP biosynthesis; GMP from XMP (L-Gln route): step 1/1. Its function is as follows. Catalyzes the synthesis of GMP from XMP. The chain is GMP synthase [glutamine-hydrolyzing] from Xanthomonas campestris pv. campestris (strain B100).